Here is a 747-residue protein sequence, read N- to C-terminus: Rho GTPase-activating protein 24 (747 aa).

Disordered regions lie at residues 1–20 (MEER…KNTK) and 327–475 (FPKD…GTHS). The region spanning 17–123 (KNTKCGWLRK…WVKSIRRVIW (107 aa)) is the PH domain. Residues 133–327 (QKLEDTVRYE…VMISKHDRLF (195 aa)) enclose the Rho-GAP domain. Polar residues-rich tracts occupy residues 334–346 (QSKP…SNNN) and 355–367 (GQLQ…NTKE). Residues S368, S390, S395, S397, S401, S412, S414, and S436 each carry the phosphoserine modification. Residues 368–380 (SPVRRCSWDKPES) are compositionally biased toward basic and acidic residues. The segment covering 381-404 (PQRSSVDNGSPTALSGSKTNSPRN) has biased composition (polar residues). Residues 431–475 (IVTNGSFSSSNAEGVEKPQTTPNGSLQARRTSSLKSSGTKMGTHS) show a composition bias toward polar residues. Residue T451 is modified to Phosphothreonine. A Phosphoserine modification is found at S494. Residues 581-639 (DFYVGNFEDPVLDGPPQDDLSHPGDYENKSDRRSVGGRSSRATSSSDNSETFVGNTSSN) are disordered. Residues 599-614 (DLSHPGDYENKSDRRS) show a composition bias toward basic and acidic residues. Over residues 616 to 629 (GGRSSRATSSSDNS) the composition is skewed to low complexity. Residues 630–639 (ETFVGNTSSN) show a composition bias toward polar residues. Residues 648 to 728 (SSLKQEMTKQ…KEMEQFFSTF (81 aa)) adopt a coiled-coil conformation.

Interacts with FLNA. Post-translationally, phosphorylated by ROCK, leading to activate the RacGAP activity.

It is found in the cytoplasm. It localises to the cytoskeleton. The protein resides in the cell junction. Its subcellular location is the adherens junction. The protein localises to the focal adhesion. It is found in the cell projection. Its function is as follows. Rho GTPase-activating protein involved in cell polarity, cell morphology and cytoskeletal organization. Acts as a GTPase activator for the Rac-type GTPase by converting it to an inactive GDP-bound state. Controls actin remodeling by inactivating Rac downstream of Rho leading to suppress leading edge protrusion and promotes cell retraction to achieve cellular polarity. Able to suppress RAC1 and CDC42 activity in vitro. Overexpression induces cell rounding with partial or complete disruption of actin stress fibers and formation of membrane ruffles, lamellipodia, and filopodia. Isoform 2 is a vascular cell-specific GAP involved in modulation of angiogenesis. This is Rho GTPase-activating protein 24 (Arhgap24) from Mus musculus (Mouse).